A 395-amino-acid chain; its full sequence is MNNAEWANKDYYADLGVSKNASAEDIKKAYRKLARENHPDKNPGDKVAEDRFKKAAEAYDVVGDETKRREYDDLKKLLASGGIRGGFGSGGADFPGGFRSTQGFDASDLFGGAGPGGGFSADGGLGDIFGGIFNRGSSPRQSARPTRGADVETDITLEFREAAKGTTIPVELTGEAPCNTCHGSGSASGQPSKCGQCNGSGFTSENKGAFGFSAPCTNCGGTGEVITDPCVDCRGRGTVRRTRSITVRIPAGVEDGQKVRLAGQGEAGPNGKPAGDLFVRVHVKEDPVFEREGNNIHVTVPVSFSELALGGAISVPTLDKPVKLKLAPGTPDGRTLRVRGRGVETRTAKGDLMVTVQVTVPPTLSDEAAEALRTYAEAEKKSGFDPRANWAGNNR.

Residues 10-75 (DYYADLGVSK…TKRREYDDLK (66 aa)) enclose the J domain. The CR-type zinc-finger motif lies at 165 to 242 (GTTIPVELTG…CRGRGTVRRT (78 aa)). Cys-178, Cys-181, Cys-194, Cys-197, Cys-216, Cys-219, Cys-230, and Cys-233 together coordinate Zn(2+). 4 CXXCXGXG motif repeats span residues 178–185 (CNTCHGSG), 194–201 (CGQCNGSG), 216–223 (CTNCGGTG), and 230–237 (CVDCRGRG).

The protein belongs to the DnaJ family. As to quaternary structure, homodimer. Zn(2+) serves as cofactor.

The protein resides in the cytoplasm. Functionally, participates actively in the response to hyperosmotic and heat shock by preventing the aggregation of stress-denatured proteins and by disaggregating proteins, also in an autonomous, DnaK-independent fashion. Unfolded proteins bind initially to DnaJ; upon interaction with the DnaJ-bound protein, DnaK hydrolyzes its bound ATP, resulting in the formation of a stable complex. GrpE releases ADP from DnaK; ATP binding to DnaK triggers the release of the substrate protein, thus completing the reaction cycle. Several rounds of ATP-dependent interactions between DnaJ, DnaK and GrpE are required for fully efficient folding. Also involved, together with DnaK and GrpE, in the DNA replication of plasmids through activation of initiation proteins. In Corynebacterium efficiens (strain DSM 44549 / YS-314 / AJ 12310 / JCM 11189 / NBRC 100395), this protein is Chaperone protein DnaJ 2.